Consider the following 90-residue polypeptide: Cell division topological specificity factor (90 aa).

The protein belongs to the MinE family.

In terms of biological role, prevents the cell division inhibition by proteins MinC and MinD at internal division sites while permitting inhibition at polar sites. This ensures cell division at the proper site by restricting the formation of a division septum at the midpoint of the long axis of the cell. This is Cell division topological specificity factor from Lachnoclostridium phytofermentans (strain ATCC 700394 / DSM 18823 / ISDg) (Clostridium phytofermentans).